Here is a 189-residue protein sequence, read N- to C-terminus: Chitin synthase 3 (189 aa).

It belongs to the chitin synthase family. Class II subfamily.

It localises to the cell membrane. It catalyses the reaction [(1-&gt;4)-N-acetyl-beta-D-glucosaminyl](n) + UDP-N-acetyl-alpha-D-glucosamine = [(1-&gt;4)-N-acetyl-beta-D-glucosaminyl](n+1) + UDP + H(+). In terms of biological role, polymerizes chitin, a structural polymer of the cell wall and septum, by transferring the sugar moiety of UDP-GlcNAc to the non-reducing end of the growing chitin polymer. This Ajellomyces capsulatus (Darling's disease fungus) protein is Chitin synthase 3 (CHS3).